The chain runs to 295 residues: GDP-polyphosphate phosphotransferase (295 aa).

The disordered stretch occupies residues 1–28 (MDIPSVDVSTATNDGASSRAKGHRSAAP). Residues 7-16 (DVSTATNDGA) show a composition bias toward polar residues. Residues H115 and H247 each carry the phosphohistidine modification.

This sequence belongs to the polyphosphate kinase 2 (PPK2) family. Class I subfamily. Interacts with Ndk. In terms of processing, autophosphorylated at His-115 and His-247 using polyP as a phosphate donor.

It catalyses the reaction [phosphate](n) + GTP = [phosphate](n+1) + GDP. In terms of biological role, uses inorganic polyphosphate (polyP) as a donor to convert GDP to GTP. In addition, modulates nucleotide triphosphate synthesis catalyzed by the nucleoside diphosphate kinase (Ndk) in favor of GTP production over CTP or UTP. Plays an important role in survival of M.tuberculosis in macrophages. The sequence is that of GDP-polyphosphate phosphotransferase from Mycobacterium tuberculosis (strain ATCC 25618 / H37Rv).